Here is a 691-residue protein sequence, read N- to C-terminus: ATP-dependent zinc metalloprotease FtsH 2 (691 aa).

The tract at residues methionine 1–aspartate 48 is disordered. The Cytoplasmic segment spans residues methionine 1 to aspartate 64. The span at glutamate 14–arginine 31 shows a compositional bias: basic and acidic residues. The helical transmembrane segment at valine 65–leucine 85 threads the bilayer. The Extracellular portion of the chain corresponds to glycine 86–glutamine 168. The helical transmembrane segment at valine 169 to phenylalanine 189 threads the bilayer. Over methionine 190–alanine 691 the chain is Cytoplasmic. An ATP-binding site is contributed by glycine 265–threonine 272. Histidine 486 contacts Zn(2+). Glutamate 487 is an active-site residue. Zn(2+)-binding residues include histidine 490 and aspartate 563.

The protein in the central section; belongs to the AAA ATPase family. It in the C-terminal section; belongs to the peptidase M41 family. As to quaternary structure, homohexamer. Zn(2+) serves as cofactor.

It is found in the cell membrane. Its function is as follows. Acts as a processive, ATP-dependent zinc metallopeptidase for both cytoplasmic and membrane proteins. Plays a role in the quality control of integral membrane proteins. In Conexibacter woesei (strain DSM 14684 / CCUG 47730 / CIP 108061 / JCM 11494 / NBRC 100937 / ID131577), this protein is ATP-dependent zinc metalloprotease FtsH 2.